The following is a 242-amino-acid chain: MHQLSTSICLCFVISSPYVYLVSIACVLWTSIPFTSGMMDHSAMHHSGMDMDHGHGDMDMGGQCNMNMLFTWSTKDLCIVFSQWHITGPFSLLMSLIVIVLLTAGYEGVRQATRKYEAAQAQRLNVFSTTTATIARLKPSLTNGVQGNEFADESATTNVPSSQTPNESSPLVAGRDNRRAVEQRGKIILAALYAVQVFYSFFIMLLFMTYNGFVMLAVAVGAFAGYLVFGDNQSAAKTVACH.

The next 2 membrane-spanning stretches (helical) occupy residues 8–28 (ICLC…ACVL) and 86–106 (ITGP…TAGY). Residues 153–175 (ESATTNVPSSQTPNESSPLVAGR) are disordered. Positions 154 to 169 (SATTNVPSSQTPNESS) are enriched in polar residues. Transmembrane regions (helical) follow at residues 187–207 (IILA…MLLF) and 210–230 (YNGF…LVFG).

It belongs to the copper transporter (Ctr) (TC 1.A.56) family. SLC31A subfamily.

The protein localises to the membrane. Its function is as follows. Transporter that is probably involved in the transport of copper, even if it does not act as a major copper transporter. The polypeptide is Copper transport protein B (Aspergillus fumigatus (strain ATCC MYA-4609 / CBS 101355 / FGSC A1100 / Af293) (Neosartorya fumigata)).